The sequence spans 251 residues: 2,3-bisphosphoglycerate-dependent phosphoglycerate mutase (251 aa).

Substrate contacts are provided by residues 13–20, 26–27, Arg65, 92–95, Lys103, 119–120, and 186–187; these read RHGESEWN, TG, ERHY, RR, and GN. His14 (tele-phosphohistidine intermediate) is an active-site residue. The active-site Proton donor/acceptor is Glu92.

This sequence belongs to the phosphoglycerate mutase family. BPG-dependent PGAM subfamily.

It catalyses the reaction (2R)-2-phosphoglycerate = (2R)-3-phosphoglycerate. It participates in carbohydrate degradation; glycolysis; pyruvate from D-glyceraldehyde 3-phosphate: step 3/5. Catalyzes the interconversion of 2-phosphoglycerate and 3-phosphoglycerate. The protein is 2,3-bisphosphoglycerate-dependent phosphoglycerate mutase of Rhodococcus opacus (strain B4).